Here is a 389-residue protein sequence, read N- to C-terminus: P2X purinoceptor 6 (389 aa).

At 1 to 45 (MQLQPAGTGNMASAAAAALVSWGFLDYKTEKYVLTRNCRVGVSQR) the chain is on the cytoplasmic side. A helical membrane pass occupies residues 46 to 66 (LLQLAVVVYVIGWALLAKKGY). Topologically, residues 67-335 (QERDLAPQTS…LVTGQAGKFA (269 aa)) are extracellular. 3 cysteine pairs are disulfide-bonded: C129/C179, C140/C163, and C146/C173. N-linked (GlcNAc...) asparagine glycans are attached at residues N167, N197, and N212. 2 disulfide bridges follow: C230/C240 and C274/C283. The chain crosses the membrane as a helical span at residues 336–356 (LIPTAITVGTGAAWLGMVTFL). Topologically, residues 357–389 (CDLLLLYVDREAGFYWRTKYEEARAPKTTTNSS) are cytoplasmic.

It belongs to the P2X receptor family. As to quaternary structure, unlike most P2RXs, P2RX6 does not seem to form homotrimers. P2RX6 are likely to form as obligate heteromers with other P2RXs subunits. Forms heterotrimer with P2RX2 with a variable subunit stoichiometry determined by subunit expression levels. Forms heterotrimer with P2RX4; functional differences between homomeric P2RX4 and P2RX4/6 heterotrimer are minor. Forms a P2RX2/P2RX4/P2RX6 heterotrimer. Interacts with SF3A1; resulting in a reduction of the splicing activity. In terms of processing, N-glycosylated. N-linked glycosylation can affect trafficking to the membrane and function. Predominantly expressed in skeletal muscle. Also expressed in lung.

The protein resides in the cell membrane. The protein localises to the endoplasmic reticulum. Its subcellular location is the nucleus. It localises to the nucleus inner membrane. The enzyme catalyses Ca(2+)(in) = Ca(2+)(out). Its function is as follows. Acts as a modulatory subunit rather than a functional channel. Unlike other P2XRs members, P2RX6 does not seem to form functional homotrimers. P2RX6 requires the presence of P2RX4 or P2RX2 to form functional heterotrimeric receptors at the plasma membrane. P2RX6 can be translocated to the nucleus, where it interacts with the splicing factor (SF3A1), to reduce the incidence of mRNA splicing. May function as a nuclear regulator of post-transcriptional modifications in neurons. This chain is P2X purinoceptor 6 (P2rx6), found in Mus musculus (Mouse).